Consider the following 513-residue polypeptide: Mannan endo-1,4-beta-mannosidase A and B (513 aa).

An N-terminal signal peptide occupies residues Met1–Ser26. Residues Gln41–Gly353 form the GH26 domain. Position 132 (His132) interacts with substrate. The Proton donor role is filled by Glu195. Substrate contacts are provided by Trp200 and Tyr270. Residue Glu295 is the Nucleophile of the active site. A substrate-binding site is contributed by Ile429–Lys430.

Belongs to the glycosyl hydrolase 26 family.

It is found in the secreted. The catalysed reaction is Random hydrolysis of (1-&gt;4)-beta-D-mannosidic linkages in mannans, galactomannans and glucomannans.. Could be involved in the degradation of glucomannan and catalyzes the endo hydrolysis of beta-1,4-linked mannan, galactomannan and glucomannan. This Caldalkalibacillus mannanilyticus (strain DSM 16130 / CIP 109019 / JCM 10596 / AM-001) (Bacillus mannanilyticus) protein is Mannan endo-1,4-beta-mannosidase A and B.